Consider the following 218-residue polypeptide: dTTP/UTP pyrophosphatase (218 aa).

Asp76 acts as the Proton acceptor in catalysis.

This sequence belongs to the Maf family. YhdE subfamily. The cofactor is a divalent metal cation.

It localises to the cytoplasm. The enzyme catalyses dTTP + H2O = dTMP + diphosphate + H(+). The catalysed reaction is UTP + H2O = UMP + diphosphate + H(+). Its function is as follows. Nucleoside triphosphate pyrophosphatase that hydrolyzes dTTP and UTP. May have a dual role in cell division arrest and in preventing the incorporation of modified nucleotides into cellular nucleic acids. This is dTTP/UTP pyrophosphatase from Cytophaga hutchinsonii (strain ATCC 33406 / DSM 1761 / CIP 103989 / NBRC 15051 / NCIMB 9469 / D465).